The following is a 63-amino-acid chain: Anionic peptide NDBP7 (63 aa).

Positions 1–20 are cleaved as a signal peptide; it reads MISRFCLLFLLVFVVSKIQA.

It belongs to the non-disulfide-bridged peptide (NDBP) superfamily. Long chain multifunctional peptide (group 2) family. In terms of tissue distribution, expressed by the venom gland.

It is found in the secreted. This is Anionic peptide NDBP7 from Lychas mucronatus (Chinese swimming scorpion).